The primary structure comprises 159 residues: Transcriptional repressor NrdR (159 aa).

Residues 3–34 (CPFCRHDDTQVVDSRVSEDGAAIRRRRRCSAC) fold into a zinc finger. An ATP-cone domain is found at 49-139 (PFVVKKDGSR…VYRRFEDVSE (91 aa)).

This sequence belongs to the NrdR family. Zn(2+) is required as a cofactor.

In terms of biological role, negatively regulates transcription of bacterial ribonucleotide reductase nrd genes and operons by binding to NrdR-boxes. This Burkholderia cenocepacia (strain ATCC BAA-245 / DSM 16553 / LMG 16656 / NCTC 13227 / J2315 / CF5610) (Burkholderia cepacia (strain J2315)) protein is Transcriptional repressor NrdR.